Reading from the N-terminus, the 490-residue chain is Cytochrome P450 71A21 (490 aa).

Residues 1–21 (MESMTMIILQSLIIFITILFF) traverse the membrane as a helical segment. Residue C432 coordinates heme.

The protein belongs to the cytochrome P450 family. Requires heme as cofactor.

The protein localises to the membrane. The chain is Cytochrome P450 71A21 (CYP71A21) from Arabidopsis thaliana (Mouse-ear cress).